The following is a 309-amino-acid chain: Ubiquitin domain-containing protein UBFD1 (309 aa).

The disordered stretch occupies residues 1 to 80 (MAAAGAPDGM…VSNGEDAGGG (80 aa)). Residues 9–19 (GMEEPGMDTEA) show a composition bias toward acidic residues. The span at 35–57 (EAEAAAGAAAEDSGAARGSLQPA) shows a compositional bias: low complexity. Residues 84–159 (ELVDLKIIWN…IMVVGSTIND (76 aa)) form the Ubiquitin-like domain. Residues 171-204 (QQDAKAEENKKEPLCRQKQHRKVLDKGKPEDVMP) are disordered. Basic and acidic residues-rich tracts occupy residues 174–185 (AKAEENKKEPLC) and 192–201 (KVLDKGKPED).

Binds polyubiquitin.

Its function is as follows. May play a role as NF-kappa-B regulator. The protein is Ubiquitin domain-containing protein UBFD1 (UBFD1) of Homo sapiens (Human).